The following is a 491-amino-acid chain: Cobyric acid synthase (491 aa).

In terms of domain architecture, GATase cobBQ-type spans 246–435 (KIDVAVIKLP…IHGIFDGANF (190 aa)). Catalysis depends on cysteine 327, which acts as the Nucleophile. Histidine 427 is a catalytic residue.

It belongs to the CobB/CobQ family. CobQ subfamily.

It participates in cofactor biosynthesis; adenosylcobalamin biosynthesis. Functionally, catalyzes amidations at positions B, D, E, and G on adenosylcobyrinic A,C-diamide. NH(2) groups are provided by glutamine, and one molecule of ATP is hydrogenolyzed for each amidation. The protein is Cobyric acid synthase of Clostridium acetobutylicum (strain ATCC 824 / DSM 792 / JCM 1419 / IAM 19013 / LMG 5710 / NBRC 13948 / NRRL B-527 / VKM B-1787 / 2291 / W).